Here is a 337-residue protein sequence, read N- to C-terminus: Probable dual-specificity RNA methyltransferase RlmN (337 aa).

Residue Glu-88 is the Proton acceptor of the active site. The region spanning 94-324 (SEKRLTVCVS…VRYSRGLATD (231 aa)) is the Radical SAM core domain. Cys-101 and Cys-327 are disulfide-bonded. [4Fe-4S] cluster contacts are provided by Cys-108, Cys-112, and Cys-115. S-adenosyl-L-methionine-binding positions include 155-156 (GE), Ser-185, 208-210 (SLH), and Asn-284. The active-site S-methylcysteine intermediate is Cys-327.

This sequence belongs to the radical SAM superfamily. RlmN family. [4Fe-4S] cluster serves as cofactor.

The protein localises to the cytoplasm. It catalyses the reaction adenosine(2503) in 23S rRNA + 2 reduced [2Fe-2S]-[ferredoxin] + 2 S-adenosyl-L-methionine = 2-methyladenosine(2503) in 23S rRNA + 5'-deoxyadenosine + L-methionine + 2 oxidized [2Fe-2S]-[ferredoxin] + S-adenosyl-L-homocysteine. The catalysed reaction is adenosine(37) in tRNA + 2 reduced [2Fe-2S]-[ferredoxin] + 2 S-adenosyl-L-methionine = 2-methyladenosine(37) in tRNA + 5'-deoxyadenosine + L-methionine + 2 oxidized [2Fe-2S]-[ferredoxin] + S-adenosyl-L-homocysteine. Functionally, specifically methylates position 2 of adenine 2503 in 23S rRNA and position 2 of adenine 37 in tRNAs. The chain is Probable dual-specificity RNA methyltransferase RlmN from Microcystis aeruginosa (strain NIES-843 / IAM M-2473).